Consider the following 147-residue polypeptide: Small ribosomal subunit protein eS19 (147 aa).

The protein belongs to the eukaryotic ribosomal protein eS19 family. Component of the small ribosomal subunit.

The protein localises to the cytoplasm. The protein resides in the nucleus. In terms of biological role, component of the small ribosomal subunit. The ribosome is a large ribonucleoprotein complex responsible for the synthesis of proteins in the cell. Required for pre-rRNA processing and maturation of 40S ribosomal subunits. The chain is Small ribosomal subunit protein eS19 (rps19) from Gillichthys mirabilis (Long-jawed mudsucker).